An 85-amino-acid polypeptide reads, in one-letter code: Small integral membrane protein 2 (85 aa).

The helical transmembrane segment at 21–43 threads the bilayer; that stretch reads GHAISILFGFWTSFICDTYIVLA. Residues 51 to 85 form a disordered region; the sequence is SPDVSASSDEPYARIQQSRRQCHAEEDQSQVPEAG.

Its subcellular location is the membrane. This chain is Small integral membrane protein 2 (SMIM2), found in Homo sapiens (Human).